The following is a 358-amino-acid chain: Chromatin modification-related protein EAF3 (358 aa).

Residues 8 to 84 (KCLCYHGPLL…DEWVGLDRIR (77 aa)) enclose the Tudor-knot domain. The segment at 103–184 (ELKNNGGKKK…KATPVLNKRS (82 aa)) is disordered. Low complexity predominate over residues 132–168 (SRTSNSGSGTNTSASSTSASNPASSSSSGTTAAASSS). Residues 184–356 (SHPKIHIKVP…TSSQYEGVAL (173 aa)) enclose the MRG domain.

Belongs to the MRG family. In terms of assembly, component of the NuA4 histone acetyltransferase complex.

The protein localises to the nucleus. In terms of biological role, involved in deacetylation of histones, chromatin assembly and chromosome segregation. May act as a transcriptional oscillator, directing histone deacetylases to specific chromosomal domains. Component of the NuA4 histone acetyltransferase complex which is involved in transcriptional activation of selected genes principally by acetylation of nucleosomal histone H4 and H2A. The NuA4 complex is also involved in DNA repair. This Kluyveromyces lactis (strain ATCC 8585 / CBS 2359 / DSM 70799 / NBRC 1267 / NRRL Y-1140 / WM37) (Yeast) protein is Chromatin modification-related protein EAF3 (EAF3).